A 378-amino-acid chain; its full sequence is Anhydro-N-acetylmuramic acid kinase (378 aa).

23-30 lines the ATP pocket; sequence GTSMDGAD.

This sequence belongs to the anhydro-N-acetylmuramic acid kinase family.

It catalyses the reaction 1,6-anhydro-N-acetyl-beta-muramate + ATP + H2O = N-acetyl-D-muramate 6-phosphate + ADP + H(+). The protein operates within amino-sugar metabolism; 1,6-anhydro-N-acetylmuramate degradation. It functions in the pathway cell wall biogenesis; peptidoglycan recycling. Catalyzes the specific phosphorylation of 1,6-anhydro-N-acetylmuramic acid (anhMurNAc) with the simultaneous cleavage of the 1,6-anhydro ring, generating MurNAc-6-P. Is required for the utilization of anhMurNAc either imported from the medium or derived from its own cell wall murein, and thus plays a role in cell wall recycling. The protein is Anhydro-N-acetylmuramic acid kinase of Bordetella pertussis (strain Tohama I / ATCC BAA-589 / NCTC 13251).